A 473-amino-acid chain; its full sequence is Bifunctional protein GlmU (473 aa).

Positions 1 to 241 (MATQPTPLTA…VGSLVGINDR (241 aa)) are pyrophosphorylase. UDP-N-acetyl-alpha-D-glucosamine contacts are provided by residues 13–16 (LAAG), Lys27, Gln84, and 89–90 (GT). Position 114 (Asp114) interacts with Mg(2+). UDP-N-acetyl-alpha-D-glucosamine is bound by residues Gly152, Glu167, Asn182, and Asn239. Asn239 serves as a coordination point for Mg(2+). The linker stretch occupies residues 242–262 (AQLAAAEEVLYGRIADRLRKS). Residues 263-473 (GVTIRTSARI…KARLKDAAKK (211 aa)) form an N-acetyltransferase region. 2 residues coordinate UDP-N-acetyl-alpha-D-glucosamine: Arg343 and Lys361. The active-site Proton acceptor is His373. UDP-N-acetyl-alpha-D-glucosamine-binding residues include Tyr376 and Asn387. Residues Ala390, 396 to 397 (NY), Ser415, Thr433, and Arg450 each bind acetyl-CoA.

This sequence in the N-terminal section; belongs to the N-acetylglucosamine-1-phosphate uridyltransferase family. The protein in the C-terminal section; belongs to the transferase hexapeptide repeat family. Homotrimer. Mg(2+) is required as a cofactor.

The protein localises to the cytoplasm. It catalyses the reaction alpha-D-glucosamine 1-phosphate + acetyl-CoA = N-acetyl-alpha-D-glucosamine 1-phosphate + CoA + H(+). The enzyme catalyses N-acetyl-alpha-D-glucosamine 1-phosphate + UTP + H(+) = UDP-N-acetyl-alpha-D-glucosamine + diphosphate. The protein operates within nucleotide-sugar biosynthesis; UDP-N-acetyl-alpha-D-glucosamine biosynthesis; N-acetyl-alpha-D-glucosamine 1-phosphate from alpha-D-glucosamine 6-phosphate (route II): step 2/2. Its pathway is nucleotide-sugar biosynthesis; UDP-N-acetyl-alpha-D-glucosamine biosynthesis; UDP-N-acetyl-alpha-D-glucosamine from N-acetyl-alpha-D-glucosamine 1-phosphate: step 1/1. It participates in bacterial outer membrane biogenesis; LPS lipid A biosynthesis. In terms of biological role, catalyzes the last two sequential reactions in the de novo biosynthetic pathway for UDP-N-acetylglucosamine (UDP-GlcNAc). The C-terminal domain catalyzes the transfer of acetyl group from acetyl coenzyme A to glucosamine-1-phosphate (GlcN-1-P) to produce N-acetylglucosamine-1-phosphate (GlcNAc-1-P), which is converted into UDP-GlcNAc by the transfer of uridine 5-monophosphate (from uridine 5-triphosphate), a reaction catalyzed by the N-terminal domain. The sequence is that of Bifunctional protein GlmU from Sorangium cellulosum (strain So ce56) (Polyangium cellulosum (strain So ce56)).